The chain runs to 126 residues: MPLRVELKPFERIVIGQSVITNSDTRTTFLIDGDAPILREKDILTAETANTPVKRIYLCVQMMYLQNDIPAYQDLYLGFIKELIEAVPSFRETIEATSNHILSGNLYKALRELRPLIKREEELLSR.

Belongs to the FlbT family.

In terms of biological role, has a post-transcriptional repressor function in flagellum biogenesis. Associates with the 5'-UTR of fljK mRNA and promotes its degradation. This is Probable flagellum biosynthesis repressor protein FlbT from Rhodopseudomonas palustris (strain ATCC BAA-98 / CGA009).